Here is a 681-residue protein sequence, read N- to C-terminus: MKTTCFLISLILIQGTKNLPILEIASNNQPQNVDSVCSGTLQKTEDVHLMGFTLSGQKVADSPLEASKRWAFRTGVPPKNVEYTEGEEAKTCYNISVTDPSGKSLLLDPPTNIRDYPKCKTIHHIQGQNPHAQGIALHLWGAFFLYDRIASTTMYRGKVFTEGNIAAMIVNKTVHKMIFSRQGQGYRHMNLTSTNKYWTSSNGTQTNDTGCFGALQEYNSTKNQTCAPSKIPPPLPTARPEIKLTSTPTDATKLNTTDPSSDDEDLATSGSGSGEREPHTTSDAVTKQGLSSTMPPTPSPQPSTPQQGGNNTNHSQDAVTELDKNNTTAQPSMPPHNTTTISTNNTSKHNFSTLSAPLQNTTNDNTQSTITENEQTSAPSITTLPPTGNPTTAKSTSSKKGPATTAPNTTNEHFTSPPPTPSSTAQHLVYFRRKRSILWREGDMFPFLDGLINAPIDFDPVPNTKTIFDESSSSGASAEEDQHASPNISLTLSYFPNINENTAYSGENENDCDAELRIWSVQEDDLAAGLSWIPFFGPGIEGLYTAVLIKNQNNLVCRLRRLANQTAKSLELLLRVTTEERTFSLINRHAIDFLLTRWGGTCKVLGPDCCIGIEDLSKNISEQIDQIKKDEQKEGTGWGLGGKWWTSDWGVLTNLGILLLLSIAVLIALSCICRIFTKYIG.

Positions 1 to 18 (MKTTCFLISLILIQGTKN) are cleaved as a signal peptide. Over 19-648 (LPILEIASNN…GLGGKWWTSD (630 aa)) the chain is Extracellular. 5 disulfides stabilise this stretch: C37–C610, C92–C119, C211–C226, C512–C557, and C602–C609. The receptor-binding stretch occupies residues 38–188 (SGTLQKTEDV…FSRQGQGYRH (151 aa)). N-linked (GlcNAc...) asparagine; by host glycans are attached at residues N94, N171, N190, N202, N207, N219, N223, and N255. The tract at residues 223–427 (NQTCAPSKIP…PPTPSSTAQH (205 aa)) is disordered. 3 stretches are compositionally biased toward polar residues: residues 244–259 (LTST…TTDP), 281–290 (TSDAVTKQGL), and 308–318 (GGNNTNHSQDA). A mucin-like region region spans residues 277–455 (EPHTTSDAVT…PFLDGLINAP (179 aa)). N-linked (GlcNAc...) asparagine; by host glycans are attached at residues N310, N313, N325, N326, N337, N344, N345, N350, N360, N408, and N487. The span at 337-347 (NTTTISTNNTS) shows a compositional bias: low complexity. Residues 348–414 (KHNFSTLSAP…TAPNTTNEHF (67 aa)) show a composition bias toward polar residues. The interval 529–549 (GLSWIPFFGPGIEGLYTAVLI) is fusion peptide. A glycan (N-linked (GlcNAc...) asparagine; by host) is linked at N564. The N-linked (GlcNAc...) asparagine; by host glycan is linked to N619. The chain crosses the membrane as a helical span at residues 649–669 (WGVLTNLGILLLLSIAVLIAL). The Cytoplasmic segment spans residues 670–681 (SCICRIFTKYIG). 2 S-palmitoyl cysteine; by host lipidation sites follow: C671 and C673.

Belongs to the filoviruses glycoprotein family. As to quaternary structure, homotrimer; each monomer consists of a GP1 and a GP2 subunit linked by disulfide bonds. The resulting peplomers (GP1,2) protrude from the virus surface as spikes. GP1,2 interacts with human CD209 and CLEC4M (collectively referred to as DC-SIGN(R)). Asialoglycoprotein receptor (ASGP-R) may be a liver-specific receptor for GP1,2. Members of the Tyro3 receptor tyrosine kinase family may be cell entry factors interacting with GP1,2. Post-translationally, N-glycosylated. In terms of processing, O-glycosylated in the mucin-like region. Specific enzymatic cleavages in vivo yield mature proteins. The precursor is processed into GP1 and GP2 by host cell furin in the trans Golgi, and maybe by other host proteases, to yield the mature GP1 and GP2 proteins. The cleavage site corresponds to the furin optimal cleavage sequence [KR]-X-[KR]-R. Post-translationally, GP1 is phosphorylated on serine residues between residues 260 and 273.

It localises to the virion membrane. The protein resides in the host cell membrane. Functionally, GP1 is responsible for binding to the receptor(s) on target cells. Interacts with CD209/DC-SIGN and CLEC4M/DC-SIGNR which act as cofactors for virus entry into the host cell. Binding to CD209 and CLEC4M, which are respectively found on dendritic cells (DCs), and on endothelial cells of liver sinusoids and lymph node sinuses, facilitate infection of macrophages and endothelial cells. These interactions not only facilitate virus cell entry, but also allow capture of viral particles by DCs and subsequent transmission to susceptible cells without DCs infection (trans infection). In terms of biological role, GP2 acts as a class I viral fusion protein. Under the current model, the protein has at least 3 conformational states: pre-fusion native state, pre-hairpin intermediate state, and post-fusion hairpin state. During viral and target cell membrane fusion, the coiled coil regions (heptad repeats) assume a trimer-of-hairpins structure, positioning the fusion peptide in close proximity to the C-terminal region of the ectodomain. The formation of this structure appears to drive apposition and subsequent fusion of viral and target cell membranes. Responsible for penetration of the virus into the cell cytoplasm by mediating the fusion of the membrane of the endocytosed virus particle with the endosomal membrane. Low pH in endosomes induces an irreversible conformational change in GP2, releasing the fusion hydrophobic peptide. The sequence is that of Envelope glycoprotein (GP) from Lake Victoria marburgvirus (strain Musoke-80) (MARV).